We begin with the raw amino-acid sequence, 259 residues long: UPF0246 protein NMB0895 (259 aa).

This sequence belongs to the UPF0246 family.

The polypeptide is UPF0246 protein NMB0895 (Neisseria meningitidis serogroup B (strain ATCC BAA-335 / MC58)).